Reading from the N-terminus, the 323-residue chain is MENYQKIEKIGEGTYGVVYKARELTHPNRIVALKKIRLEAEDEGVPSTAIREISLLKEMNDPNIVRLLNIVHADGHKLYLVFEFLDLDLKKYMEALPVSEGGRGRALPDGSTLSRNLGLGDAMVKKFMAQLIEGIRFCHSHRVLHRDLKPQNLLIDRDGNLKLADFGLARAFGVPLRTYTHEVVTLWYRSPEILLGGRQYSTGVDMWSCGAIFAEMCTRKPLFPGDSEIDEIFKIFRILGTPDETIWPGVTSFPDFKPTFPKWKREDIQNVVPGLEEDGLDLLEALLEYDPARRISAKQACMHPYFQHGSSYYSGRARRNGFH.

The Protein kinase domain occupies 4–306 (YQKIEKIGEG…AKQACMHPYF (303 aa)). ATP contacts are provided by residues 10–18 (IGEGTYGVV) and K34. T14 is subject to Phosphothreonine. Y15 carries the post-translational modification Phosphotyrosine. D147 (proton acceptor) is an active-site residue. T180 carries the phosphothreonine; by CAK modification.

Belongs to the protein kinase superfamily. CMGC Ser/Thr protein kinase family. CDC2/CDKX subfamily. In terms of assembly, forms a stable but non-covalent complex with a regulatory subunit (SUC1) and with a cyclin.

The catalysed reaction is L-seryl-[protein] + ATP = O-phospho-L-seryl-[protein] + ADP + H(+). It carries out the reaction L-threonyl-[protein] + ATP = O-phospho-L-threonyl-[protein] + ADP + H(+). Its activity is regulated as follows. Phosphorylation at Thr-14 or Tyr-15 inactivates the enzyme, while phosphorylation at Thr-180 activates it. Cyclin-dependent kinase that acts as a master regulator of the mitotic and meiotic cell cycles. The chain is Cyclin-dependent kinase 1 from Emericella nidulans (strain FGSC A4 / ATCC 38163 / CBS 112.46 / NRRL 194 / M139) (Aspergillus nidulans).